The primary structure comprises 279 residues: Tryptophan 2,3-dioxygenase (279 aa).

Residues 48-52, Tyr-110, and Arg-114 contribute to the substrate site; that span reads FIVIH. Heme is bound at residue His-237. Thr-251 provides a ligand contact to substrate.

It belongs to the tryptophan 2,3-dioxygenase family. Homotetramer. It depends on heme as a cofactor.

The enzyme catalyses L-tryptophan + O2 = N-formyl-L-kynurenine. Its pathway is amino-acid degradation; L-tryptophan degradation via kynurenine pathway; L-kynurenine from L-tryptophan: step 1/2. Its function is as follows. Heme-dependent dioxygenase that catalyzes the oxidative cleavage of the L-tryptophan (L-Trp) pyrrole ring and converts L-tryptophan to N-formyl-L-kynurenine. Catalyzes the oxidative cleavage of the indole moiety. The sequence is that of Tryptophan 2,3-dioxygenase from Bacillus cereus (strain ZK / E33L).